Reading from the N-terminus, the 148-residue chain is 3-hydroxyacyl-[acyl-carrier-protein] dehydratase FabZ (148 aa).

Residue His50 is part of the active site.

Belongs to the thioester dehydratase family. FabZ subfamily.

It is found in the cytoplasm. It catalyses the reaction a (3R)-hydroxyacyl-[ACP] = a (2E)-enoyl-[ACP] + H2O. In terms of biological role, involved in unsaturated fatty acids biosynthesis. Catalyzes the dehydration of short chain beta-hydroxyacyl-ACPs and long chain saturated and unsaturated beta-hydroxyacyl-ACPs. This Levilactobacillus brevis (strain ATCC 367 / BCRC 12310 / CIP 105137 / JCM 1170 / LMG 11437 / NCIMB 947 / NCTC 947) (Lactobacillus brevis) protein is 3-hydroxyacyl-[acyl-carrier-protein] dehydratase FabZ.